A 385-amino-acid chain; its full sequence is AA13 family lytic polysaccharide monooxygenase NCU08746 (385 aa).

The N-terminal stretch at 1 to 18 (MKFSIISVALASAITVDA) is a signal peptide. Position 19 (His19) interacts with Cu(2+). Residue His19 is modified to Methylhistidine. The Chitin-binding type-4 domain occupies 19–248 (HGYLTIPFSR…AQVYLSCADI (230 aa)). A disulfide bridge links Cys40 with Cys43. N-linked (GlcNAc...) asparagine glycosylation is present at Asn54. Cystine bridges form between Cys66/Cys245, Cys102/Cys203, Cys118/Cys145, Cys153/Cys161, Cys167/Cys173, and Cys181/Cys192. His109 lines the Cu(2+) pocket. A Cu(2+)-binding site is contributed by Tyr242. The CBM20 domain maps to 278-385 (CTPAATVAVT…ESVAVESSWK (108 aa)). A glycan (N-linked (GlcNAc...) asparagine) is linked at Asn365.

Belongs to the polysaccharide monooxygenase AA13 family. The cofactor is Cu(2+).

Its subcellular location is the secreted. The enzyme catalyses starch + reduced acceptor + O2 = D-glucono-1,5-lactone-terminated malto-oligosaccharides + short-chain malto-oligosaccharides + acceptor + H2O.. Functionally, starch-active lytic polysaccharide monooxygenase that oxidizes the C1 position of starch substrates, but not in cellulose or chitin. Catalysis by LPMOs requires the reduction of the active-site copper from Cu(II) to Cu(I) by a reducing agent and H(2)O(2) or O(2) as a cosubstrate. The sequence is that of AA13 family lytic polysaccharide monooxygenase NCU08746 from Neurospora crassa (strain ATCC 24698 / 74-OR23-1A / CBS 708.71 / DSM 1257 / FGSC 987).